The primary structure comprises 255 residues: 5-oxoprolinase subunit A 1 (255 aa).

Belongs to the LamB/PxpA family. In terms of assembly, forms a complex composed of PxpA, PxpB and PxpC.

The catalysed reaction is 5-oxo-L-proline + ATP + 2 H2O = L-glutamate + ADP + phosphate + H(+). Functionally, catalyzes the cleavage of 5-oxoproline to form L-glutamate coupled to the hydrolysis of ATP to ADP and inorganic phosphate. This Bradyrhizobium diazoefficiens (strain JCM 10833 / BCRC 13528 / IAM 13628 / NBRC 14792 / USDA 110) protein is 5-oxoprolinase subunit A 1.